The following is a 428-amino-acid chain: MKKTLLAVAIGGAMFATSAAAVDFHGYARSGIGWTSGGGEQTALKVNGGGSKYRLGNETETYAEFKLGQELFKDGNKSIYLDSNIAYSIDQQVDWEATDPAFREINVQFKNFAEDLLPGATLWAGKRFYQRHDVHMNDFYYWDISGPGAGVENIDLGFGKLSLAVTRNTEGGGTATYGQDKVYYIDNNGQIQYRYEDRKADVYNDVFDIRLAELNVNPNGKLEIGFDYGNAHTKNGYHLEPGASKNGYMITLEHTQGEFFGGFNKFVAQYATDSMTSWNTGHSQGGSVNNNGDMLRLIDHGVVQFSPKVEMMYALIYEKTDLDNNQGKTWYSAGIRPMYKWNKTMSTLLEVGYDRIKEQSSGKKNDLAKVTLAQQWQAGDSIWARPAIRVFGTYGHWNDKFNITDRTNAGYKAKDAEFVAGVQFEAWW.

An N-terminal signal peptide occupies residues 1–21 (MKKTLLAVAIGGAMFATSAAA).

The protein belongs to the porin LamB (TC 1.B.3) family. In terms of assembly, homotrimer formed of three 18-stranded antiparallel beta-barrels, containing three independent channels.

The protein localises to the cell outer membrane. It carries out the reaction beta-maltose(in) = beta-maltose(out). Functionally, involved in the transport of maltose and maltodextrins. In Mannheimia succiniciproducens (strain KCTC 0769BP / MBEL55E), this protein is Maltoporin.